Reading from the N-terminus, the 195-residue chain is Imidazoleglycerol-phosphate dehydratase (195 aa).

Belongs to the imidazoleglycerol-phosphate dehydratase family.

It localises to the cytoplasm. It catalyses the reaction D-erythro-1-(imidazol-4-yl)glycerol 3-phosphate = 3-(imidazol-4-yl)-2-oxopropyl phosphate + H2O. It functions in the pathway amino-acid biosynthesis; L-histidine biosynthesis; L-histidine from 5-phospho-alpha-D-ribose 1-diphosphate: step 6/9. This chain is Imidazoleglycerol-phosphate dehydratase, found in Dinoroseobacter shibae (strain DSM 16493 / NCIMB 14021 / DFL 12).